A 316-amino-acid chain; its full sequence is Probable cell division protein WhiA (316 aa).

The H-T-H motif DNA-binding region spans 276–309 (SLEELGKIAEPQITKDAIAGRIRRLLQLAEKTEK).

Belongs to the WhiA family.

In terms of biological role, involved in cell division and chromosome segregation. In Bifidobacterium longum subsp. infantis (strain ATCC 15697 / DSM 20088 / JCM 1222 / NCTC 11817 / S12), this protein is Probable cell division protein WhiA.